The sequence spans 424 residues: UDP-N-acetylglucosamine 1-carboxyvinyltransferase (424 aa).

22–23 (KN) is a binding site for phosphoenolpyruvate. Arg98 lines the UDP-N-acetyl-alpha-D-glucosamine pocket. Residue Cys122 is the Proton donor of the active site. Position 122 is a 2-(S-cysteinyl)pyruvic acid O-phosphothioketal (Cys122). Residues 127 to 131 (RPVDQ), Asp312, and Ile334 contribute to the UDP-N-acetyl-alpha-D-glucosamine site.

Belongs to the EPSP synthase family. MurA subfamily.

The protein localises to the cytoplasm. The enzyme catalyses phosphoenolpyruvate + UDP-N-acetyl-alpha-D-glucosamine = UDP-N-acetyl-3-O-(1-carboxyvinyl)-alpha-D-glucosamine + phosphate. Its pathway is cell wall biogenesis; peptidoglycan biosynthesis. In terms of biological role, cell wall formation. Adds enolpyruvyl to UDP-N-acetylglucosamine. The sequence is that of UDP-N-acetylglucosamine 1-carboxyvinyltransferase from Xanthomonas axonopodis pv. citri (strain 306).